A 126-amino-acid polypeptide reads, in one-letter code: Transcription antitermination protein NusB (126 aa).

It belongs to the NusB family.

In terms of biological role, involved in transcription antitermination. Required for transcription of ribosomal RNA (rRNA) genes. Binds specifically to the boxA antiterminator sequence of the ribosomal RNA (rrn) operons. The protein is Transcription antitermination protein NusB of Oceanobacillus iheyensis (strain DSM 14371 / CIP 107618 / JCM 11309 / KCTC 3954 / HTE831).